We begin with the raw amino-acid sequence, 625 residues long: Enolase 4 (625 aa).

Residues 184–226 form a disordered region; it reads YSTVPTPLPPVPPPPPPPPPTKKKGQKPGRKDTITEKPIAPAE. Pro residues predominate over residues 189 to 203; it reads TPLPPVPPPPPPPPP. Valine 300 serves as a coordination point for substrate. Positions 331–350 are disordered; sequence PSPPKAETKKGHDGSKRGQQ. The segment covering 336–346 has biased composition (basic and acidic residues); the sequence is AETKKGHDGSK. Asparagine 497 functions as the Proton acceptor in the catalytic mechanism. Position 548 (glycine 548) interacts with substrate. The interval 604–625 is disordered; sequence PLVPTFPTQGVEESAETGASSG.

This sequence belongs to the enolase family. In terms of assembly, interacts with ENO1 and AKAP4. Post-translationally, synthesized as an approximately 70-kDa precursor, which then undergoes proteolytic cleavage to an approximately 60-kDa enzyme; HOATZ associates directly or indirectly with ENO4 to mediate this process before its transport to mature flagella.

The enzyme catalyses (2R)-2-phosphoglycerate = phosphoenolpyruvate + H2O. It participates in carbohydrate degradation; glycolysis; pyruvate from D-glyceraldehyde 3-phosphate: step 4/5. Functionally, may be required for sperm motility and function. In Homo sapiens (Human), this protein is Enolase 4.